Reading from the N-terminus, the 749-residue chain is DNA topoisomerase 1 (749 aa).

Residues 1–110 (MSDSEDVALS…PKKEDSVETD (110 aa)) are disordered. Over residues 62 to 75 (LSKEKVNNKVKDEL) the composition is skewed to basic and acidic residues. The segment covering 79-94 (PVTPKKTPKISKTPVS) has biased composition (low complexity). Positions 101–110 (PKKEDSVETD) are enriched in basic and acidic residues. Interaction with DNA regions lie at residues 338–339 (KY), 401–406 (RAGGEK), and 493–495 (TAK). The region spanning 345-749 (NSSIKGISDM…IESTDENWRF (405 aa)) is the Topo IB-type catalytic domain. The O-(3'-phospho-DNA)-tyrosine intermediate role is filled by Y707.

The protein belongs to the type IB topoisomerase family.

The protein localises to the nucleus. Its subcellular location is the nucleolus. The protein resides in the nucleoplasm. The catalysed reaction is ATP-independent breakage of single-stranded DNA, followed by passage and rejoining.. In terms of biological role, releases the supercoiling and torsional tension of DNA introduced during the DNA replication and transcription by transiently cleaving and rejoining one strand of the DNA duplex. Introduces a single-strand break via transesterification at the specific target site 5'-[CT]CCTTp site in duplex DNA. The scissile phosphodiester is attacked by the catalytic tyrosine of the enzyme, resulting in the formation of a DNA-(3'-phosphotyrosyl)-enzyme intermediate and the expulsion of a 5'-OH DNA strand. The free DNA strand then undergoes passage around the unbroken strand thus removing DNA supercoils. Finally, in the religation step, the DNA 5'-OH attacks the covalent intermediate to expel the active-site tyrosine and restore the DNA phosphodiester backbone. This chain is DNA topoisomerase 1 (TOP1), found in Candidozyma auris (Yeast).